The sequence spans 552 residues: MSKFVFVTGGVVSSIGKGIVAASLGRLLKSRHYSVSILKLDPYINVDPGTMSPFQHGEVFVTEDGAETDLDLGHYERFTDTSMSRLNSVTTGSIYQAVINKERRGAYMGGTVQVIPHITNEIKERILRVAQNTNPDVVITEIGGTVGDIESLPFLEAIRQFRKEVGRHNVIYMHVTLIPWIPAAKEMKTKPTQHSVKELRSIGIQPDILVCRCDRPLHPGMKEKLSEFCDVPVESVITCQDASSIYEVPLILEKEGLAHQTLELLRMENRSPDLSQWQSLVEKMQSPHHDITVALVGKYVQLSDAYLSVVEALGHAAIASDSKLHLRWISAEEIEAQGAATFLKDVDGVLVPGGFGIRGVDGKVQAIEYARENQLPFLGLCLGMQCSVIEWARNVAKLPEANSAEFETETPNPVINLLPEQQDVVDLGGTMRLGLYPCRIAPDTLAFSLYQKEVVYERHRHRYEFNNSYRTQFTDTGFVVSGTSPDGRLVEIVEYPHHPFFIACQFHPEFHSRPNQAHPLFSGFINAVLKRRNAPAKIAVNCHTVTEDHEPS.

An amidoligase domain region spans residues 1 to 267; it reads MSKFVFVTGG…AHQTLELLRM (267 aa). Ser13 lines the CTP pocket. Ser13 contributes to the UTP binding site. Residues 14–19 and Asp71 contribute to the ATP site; that span reads SIGKGI. Mg(2+) contacts are provided by Asp71 and Glu141. Residues 148–150, 188–193, and Lys224 each bind CTP; these read DIE and KTKPTQ. Residues 188-193 and Lys224 each bind UTP; that span reads KTKPTQ. Positions 292–534 constitute a Glutamine amidotransferase type-1 domain; it reads TVALVGKYVQ…INAVLKRRNA (243 aa). L-glutamine is bound at residue Gly354. Cys381 acts as the Nucleophile; for glutamine hydrolysis in catalysis. L-glutamine contacts are provided by residues 382–385, Glu405, and Arg462; that span reads LGMQ. Residues His507 and Glu509 contribute to the active site.

This sequence belongs to the CTP synthase family. Homotetramer.

The catalysed reaction is UTP + L-glutamine + ATP + H2O = CTP + L-glutamate + ADP + phosphate + 2 H(+). It catalyses the reaction L-glutamine + H2O = L-glutamate + NH4(+). It carries out the reaction UTP + NH4(+) + ATP = CTP + ADP + phosphate + 2 H(+). It functions in the pathway pyrimidine metabolism; CTP biosynthesis via de novo pathway; CTP from UDP: step 2/2. Allosterically activated by GTP, when glutamine is the substrate; GTP has no effect on the reaction when ammonia is the substrate. The allosteric effector GTP functions by stabilizing the protein conformation that binds the tetrahedral intermediate(s) formed during glutamine hydrolysis. Inhibited by the product CTP, via allosteric rather than competitive inhibition. Its function is as follows. Catalyzes the ATP-dependent amination of UTP to CTP with either L-glutamine or ammonia as the source of nitrogen. Regulates intracellular CTP levels through interactions with the four ribonucleotide triphosphates. The polypeptide is CTP synthase (Synechocystis sp. (strain ATCC 27184 / PCC 6803 / Kazusa)).